A 400-amino-acid polypeptide reads, in one-letter code: Elongation factor Tu 1 (400 aa).

A tr-type G domain is found at 10-209; sequence KPHVNIGTIG…AVDEYIPTPQ (200 aa). A G1 region spans residues 19–26; it reads GHVDHGKT. 19 to 26 contributes to the GTP binding site; it reads GHVDHGKT. Position 26 (Thr26) interacts with Mg(2+). The G2 stretch occupies residues 60 to 64; the sequence is GITIN. Residues 81–84 are G3; it reads DCPG. Residues 81 to 85 and 136 to 139 each bind GTP; these read DCPGH and NKAD. Positions 136–139 are G4; it reads NKAD. Residues 174–176 are G5; the sequence is SAL.

This sequence belongs to the TRAFAC class translation factor GTPase superfamily. Classic translation factor GTPase family. EF-Tu/EF-1A subfamily. In terms of assembly, monomer.

The protein resides in the cytoplasm. The catalysed reaction is GTP + H2O = GDP + phosphate + H(+). Its function is as follows. GTP hydrolase that promotes the GTP-dependent binding of aminoacyl-tRNA to the A-site of ribosomes during protein biosynthesis. The chain is Elongation factor Tu 1 from Pelotomaculum thermopropionicum (strain DSM 13744 / JCM 10971 / SI).